The following is a 241-amino-acid chain: Sugar fermentation stimulation protein homolog (241 aa).

It belongs to the SfsA family.

In Nostoc punctiforme (strain ATCC 29133 / PCC 73102), this protein is Sugar fermentation stimulation protein homolog.